Here is a 113-residue protein sequence, read N- to C-terminus: Large ribosomal subunit protein bL19 (113 aa).

The protein belongs to the bacterial ribosomal protein bL19 family.

This protein is located at the 30S-50S ribosomal subunit interface and may play a role in the structure and function of the aminoacyl-tRNA binding site. This chain is Large ribosomal subunit protein bL19, found in Mycobacteroides abscessus (strain ATCC 19977 / DSM 44196 / CCUG 20993 / CIP 104536 / JCM 13569 / NCTC 13031 / TMC 1543 / L948) (Mycobacterium abscessus).